Reading from the N-terminus, the 540-residue chain is Phosphoenolpyruvate carboxykinase (ATP) (540 aa).

Arg-65 serves as a coordination point for substrate. Lys-87 carries the post-translational modification N6-acetyllysine. Residues Tyr-207 and Lys-213 each contribute to the substrate site. Residues Lys-213, His-232, and 248-256 (GLSGTGKTT) contribute to the ATP site. Residues Lys-213 and His-232 each contribute to the Mn(2+) site. Asp-269 provides a ligand contact to Mn(2+). ATP-binding positions include Glu-297, Arg-333, 449–450 (RI), and Thr-455. Arg-333 lines the substrate pocket. At Lys-523 the chain carries N6-acetyllysine.

It belongs to the phosphoenolpyruvate carboxykinase (ATP) family. In terms of assembly, monomer. It depends on Mn(2+) as a cofactor.

The protein localises to the cytoplasm. The enzyme catalyses oxaloacetate + ATP = phosphoenolpyruvate + ADP + CO2. It functions in the pathway carbohydrate biosynthesis; gluconeogenesis. In terms of biological role, involved in the gluconeogenesis. Catalyzes the conversion of oxaloacetate (OAA) to phosphoenolpyruvate (PEP) through direct phosphoryl transfer between the nucleoside triphosphate and OAA. This Escherichia coli O127:H6 (strain E2348/69 / EPEC) protein is Phosphoenolpyruvate carboxykinase (ATP).